The chain runs to 167 residues: Peptidoglycan L-alanyl-D-glutamate endopeptidase CwlK (167 aa).

The first 26 residues, 1-26 (MNLPAKTFVILCILFLLDLCFSYIRH), serve as a signal peptide directing secretion.

This sequence belongs to the peptidase M15C family.

The protein resides in the cell membrane. Its function is as follows. Cleaves the linkage of the L-alanine-D-glutamic acid of B.subtilis cell wall. This is Peptidoglycan L-alanyl-D-glutamate endopeptidase CwlK (cwlK) from Bacillus subtilis (strain 168).